We begin with the raw amino-acid sequence, 139 residues long: Short neuropeptide F (139 aa).

The propeptide occupies 1-23 (MGRARRTVRAPAQHDALGGHALA). A disordered region spans residues 1–48 (MGRARRTVRAPAQHDALGGHALARKSVRSPSRRLRFGRRSDPDMPPQA). The span at 22–37 (LARKSVRSPSRRLRFG) shows a compositional bias: basic residues. At F36 the chain carries Phenylalanine amide. Residues 40–62 (SDPDMPPQAPLDEMNELLSLREV) constitute a propeptide that is removed on maturation. A Phenylalanine amide modification is found at F70. A propeptide spanning residues 74–96 (SEERAVPHIFPQEFLTQEQDRAV) is cleaved from the precursor. The residue at position 105 (F105) is a Phenylalanine amide. The propeptide occupies 109–139 (SDNNMFLLPYESALPQEVKANGSVEDDRQQE).

The protein belongs to the NPY family. As to expression, sNPF peptide 1: Expressed in corpora cardiaca (CC), corpora allata (CA), antennal lobe (AL) and gnathal ganglion (GNG) (at protein level). Expression in AL detected in all animals, in GNG in most animals, expression in CC and CA in some animals (at protein level). sNPF peptide 2: Expressed in corpora cardiaca (CC), corpora allata (CA), antennal lobe (AL) and gnathal ganglion (GNG) (at protein level). Expression in AL detected in all animals, in GNG, CC and CA in most animals (at protein level). sNPF peptide 3: Expressed in corpora cardiaca (CC), corpora allata (CA), antennal lobe (AL) and gnathal ganglion (GNG) (at protein level). Expression detected in all animals (at protein level).

It is found in the secreted. Functionally, plays a role in controlling food intake and regulating body size. The chain is Short neuropeptide F from Agrotis ipsilon (Black cutworm moth).